Reading from the N-terminus, the 303-residue chain is Y-box-binding protein 1 (303 aa).

Polar residues predominate over residues M1–P12. The segment at M1 to G28 is disordered. Residues G39 to V103 enclose the CSD domain. Residues W43–N48 are C5-methylcytosine binding. The interval A98–E303 is disordered. Over residues H122–P132 the composition is skewed to basic residues. Composition is skewed to low complexity over residues P133 to N143 and P173 to Y187. Basic residues-rich tracts occupy residues F220 to P229 and R258 to R270. Basic and acidic residues predominate over residues P271 to A284.

This sequence belongs to the YBX1 family.

The protein resides in the cytoplasm. It is found in the nucleus. It localises to the cytoplasmic granule. The protein localises to the secreted. Its subcellular location is the extracellular exosome. The protein resides in the P-body. In terms of biological role, DNA- and RNA-binding protein involved in various processes, such as translational repression, RNA stabilization, mRNA splicing and transcription regulation. Binds preferentially to the 5'-[CU]CUGCG-3' RNA motif and specifically recognizes mRNA transcripts modified by C5-methylcytosine (m5C). Promotes mRNA stabilization: acts by binding to m5C-containing mRNAs and preventing mRNA decay. Plays a role in the maternal-to-zygotic transition in early embryo by binding to m5C-containing maternal mRNAs and preventing their degradation. Also promotes maternal-to-zygotic transition in oocytes and embryos by promoting translation repression; molecular mechanisms governing translation repression are unknown. Plays a key role in RNA composition of extracellular exosomes by defining the sorting of small non-coding RNAs, such as tRNAs, Y RNAs, Vault RNAs and miRNAs. Probably sorts RNAs in exosomes by recognizing and binding C5-methylcytosine (m5C)-containing RNAs. Acts as a key effector of epidermal progenitors by preventing epidermal progenitor senescence: acts by regulating the translation of a senescence-associated subset of cytokine mRNAs, possibly by binding to m5C-containing mRNAs. Also involved in pre-mRNA alternative splicing regulation: binds to splice sites in pre-mRNA and regulates splice site selection. Also able to bind DNA and regulate transcription. Binds to promoters that contain a Y-box (5'-CTGATTGGCCAA-3'). Promotes separation of DNA strands that contain mismatches or are modified by cisplatin. Has endonucleolytic activity and can introduce nicks or breaks into double-stranded DNA, suggesting a role in DNA repair. The secreted form acts as an extracellular mitogen and stimulates cell migration and proliferation. This Xenopus laevis (African clawed frog) protein is Y-box-binding protein 1.